The chain runs to 128 residues: uncharacterized protein (128 aa).

Cys10 and Cys13 are oxidised to a cystine.

It belongs to the ArsC family.

This is an uncharacterized protein from Ureaplasma parvum serovar 3 (strain ATCC 700970).